The following is a 695-amino-acid chain: UvrABC system protein C (695 aa).

Basic and acidic residues predominate over residues 1–10 (MNHDPAETRD). The segment at 1–44 (MNHDPAETRDTAAAPLADTESPSPVSPELTPHPAPAAQDIDTAT) is disordered. The GIY-YIG domain occupies 88–166 (TSPGVYRMLN…IKQLRPRFNV (79 aa)). The 36-residue stretch at 276–311 (RAVKQELAVEMEKASNELEFETAALYRDRLAALSAI) folds into the UVR domain.

This sequence belongs to the UvrC family. As to quaternary structure, interacts with UvrB in an incision complex.

It localises to the cytoplasm. Functionally, the UvrABC repair system catalyzes the recognition and processing of DNA lesions. UvrC both incises the 5' and 3' sides of the lesion. The N-terminal half is responsible for the 3' incision and the C-terminal half is responsible for the 5' incision. The chain is UvrABC system protein C from Rhodopseudomonas palustris (strain HaA2).